Consider the following 193-residue polypeptide: Adenine phosphoribosyltransferase (193 aa).

Belongs to the purine/pyrimidine phosphoribosyltransferase family. In terms of assembly, homodimer.

The protein localises to the cytoplasm. The enzyme catalyses AMP + diphosphate = 5-phospho-alpha-D-ribose 1-diphosphate + adenine. Its pathway is purine metabolism; AMP biosynthesis via salvage pathway; AMP from adenine: step 1/1. In terms of biological role, catalyzes a salvage reaction resulting in the formation of AMP, that is energically less costly than de novo synthesis. The chain is Adenine phosphoribosyltransferase from Bifidobacterium longum (strain DJO10A).